We begin with the raw amino-acid sequence, 604 residues long: Aspartate--tRNA(Asp/Asn) ligase (604 aa).

Glu-175 provides a ligand contact to L-aspartate. The aspartate stretch occupies residues 199 to 202 (QQFK). L-aspartate is bound by residues Arg-221 and His-456. Residue 221-223 (RDE) participates in ATP binding. Glu-496 serves as a coordination point for ATP. Arg-503 lines the L-aspartate pocket. An ATP-binding site is contributed by 548–551 (GVDR).

Belongs to the class-II aminoacyl-tRNA synthetase family. Type 1 subfamily. Homodimer.

It is found in the cytoplasm. The catalysed reaction is tRNA(Asx) + L-aspartate + ATP = L-aspartyl-tRNA(Asx) + AMP + diphosphate. Its function is as follows. Aspartyl-tRNA synthetase with relaxed tRNA specificity since it is able to aspartylate not only its cognate tRNA(Asp) but also tRNA(Asn). Reaction proceeds in two steps: L-aspartate is first activated by ATP to form Asp-AMP and then transferred to the acceptor end of tRNA(Asp/Asn). This is Aspartate--tRNA(Asp/Asn) ligase from Methylorubrum extorquens (strain CM4 / NCIMB 13688) (Methylobacterium extorquens).